A 691-amino-acid polypeptide reads, in one-letter code: Threonine--tRNA ligase (691 aa).

Residues 1 to 22 (MSVPAQPAPGADGGDPRQPIRV) form a disordered region. The 73-residue stretch at 1 to 73 (MSVPAQPAPG…DADAEVTPIA (73 aa)) folds into the TGS domain. The interval 268–574 (DHRKLGVELD…LTEHYAGAFP (307 aa)) is catalytic. Zn(2+) contacts are provided by Cys373, His424, and His551.

This sequence belongs to the class-II aminoacyl-tRNA synthetase family. As to quaternary structure, homodimer. Zn(2+) serves as cofactor.

Its subcellular location is the cytoplasm. The catalysed reaction is tRNA(Thr) + L-threonine + ATP = L-threonyl-tRNA(Thr) + AMP + diphosphate + H(+). Catalyzes the attachment of threonine to tRNA(Thr) in a two-step reaction: L-threonine is first activated by ATP to form Thr-AMP and then transferred to the acceptor end of tRNA(Thr). Also edits incorrectly charged L-seryl-tRNA(Thr). This chain is Threonine--tRNA ligase, found in Mycobacterium ulcerans (strain Agy99).